Reading from the N-terminus, the 572-residue chain is MSKLIKGIAASDGVAIAKAYLLVEPDLTFDKNEKVTDVEGEVAKFNSAIEASKVELTKIRNNAEVQLGADKAAIFDAHLLVLDDPELIQPIQDKIKNENANAATALTDVTTQFVTIFESMDNEYMKERAADIRDVSKRVLSHILGVELPNPSMIDESVVIVGNDLTPSDTAQLNKEFVQGFATNIGGRTSHSAIMSRSLEIPAIVGTKSITQEVKQGDIIIVDGLNGDVIVNPTEDELIAYQDKRECYFADKKELQKLRDADTVTVDGVHAELAANIGTPNDLPGVIENGAQGIGLYRTEFLYMGRDQMPTEEEQFEAYKEVLEAMDGKRVVVRTLDIGGDKELSYLNLPEEMNPFLGYRAIRLCLAQQDIFRPQLRALLRASVYGKLNIMFPMVATINEFREAKAILLEEKENLKNEGHDISDDIELGIMVEIPATAALADVFAKEVDFFSIGTNDLIQYTLAADRMSERVSYLYQPYNPSILRLVKQVIEASHKEGKWTGMCGEMAGDETAIPLLLGLGLDEFSMSATSILKARRQINGLSKNEMTELANRAVDCATQEEVIELVNNYVK.

His191 (tele-phosphohistidine intermediate) is an active-site residue. 2 residues coordinate phosphoenolpyruvate: Arg298 and Arg334. 2 residues coordinate Mg(2+): Glu433 and Asp457. Residues 456 to 457 and Arg467 contribute to the phosphoenolpyruvate site; that span reads ND. Cys504 functions as the Proton donor in the catalytic mechanism.

It belongs to the PEP-utilizing enzyme family. In terms of assembly, homodimer. The cofactor is Mg(2+).

Its subcellular location is the cytoplasm. The catalysed reaction is L-histidyl-[protein] + phosphoenolpyruvate = N(pros)-phospho-L-histidyl-[protein] + pyruvate. Its function is as follows. General (non sugar-specific) component of the phosphoenolpyruvate-dependent sugar phosphotransferase system (sugar PTS). This major carbohydrate active-transport system catalyzes the phosphorylation of incoming sugar substrates concomitantly with their translocation across the cell membrane. Enzyme I transfers the phosphoryl group from phosphoenolpyruvate (PEP) to the phosphoryl carrier protein (HPr). The protein is Phosphoenolpyruvate-protein phosphotransferase (ptsI) of Staphylococcus aureus (strain Mu50 / ATCC 700699).